A 184-amino-acid chain; its full sequence is Small ribosomal subunit protein uS7 (184 aa).

The protein belongs to the universal ribosomal protein uS7 family. Part of the 30S ribosomal subunit.

One of the primary rRNA binding proteins, it binds directly to 16S rRNA where it nucleates assembly of the head domain of the 30S subunit. Is located at the subunit interface close to the decoding center. In Thermoplasma volcanium (strain ATCC 51530 / DSM 4299 / JCM 9571 / NBRC 15438 / GSS1), this protein is Small ribosomal subunit protein uS7.